Reading from the N-terminus, the 169-residue chain is Large ribosomal subunit protein uL10 (169 aa).

This sequence belongs to the universal ribosomal protein uL10 family. As to quaternary structure, part of the ribosomal stalk of the 50S ribosomal subunit. The N-terminus interacts with L11 and the large rRNA to form the base of the stalk. The C-terminus forms an elongated spine to which L12 dimers bind in a sequential fashion forming a multimeric L10(L12)X complex.

In terms of biological role, forms part of the ribosomal stalk, playing a central role in the interaction of the ribosome with GTP-bound translation factors. This is Large ribosomal subunit protein uL10 from Rickettsia akari (strain Hartford).